Reading from the N-terminus, the 84-residue chain is Exodeoxyribonuclease 7 small subunit (84 aa).

The protein belongs to the XseB family. In terms of assembly, heterooligomer composed of large and small subunits.

Its subcellular location is the cytoplasm. The enzyme catalyses Exonucleolytic cleavage in either 5'- to 3'- or 3'- to 5'-direction to yield nucleoside 5'-phosphates.. Its function is as follows. Bidirectionally degrades single-stranded DNA into large acid-insoluble oligonucleotides, which are then degraded further into small acid-soluble oligonucleotides. This is Exodeoxyribonuclease 7 small subunit from Yersinia pseudotuberculosis serotype O:3 (strain YPIII).